The following is a 1098-amino-acid chain: Gramicidin S synthase 1 (1098 aa).

Residues 538–612 (APRNEIEETL…QLVHYIKDSK (75 aa)) form the Carrier domain. O-(pantetheine 4'-phosphoryl)serine is present on Ser573.

The protein belongs to the ATP-dependent AMP-binding enzyme family. Large multienzyme complex of GrsA and GrsB. Requires pantetheine 4'-phosphate as cofactor.

The enzyme catalyses L-phenylalanine + ATP + H2O = D-phenylalanine + AMP + diphosphate + H(+). It functions in the pathway antibiotic biosynthesis; gramicidin S biosynthesis. Its function is as follows. In the first step of peptide synthesis this enzyme activates phenylalanine and racemizes it to the D-isomer. The protein is Gramicidin S synthase 1 (grsA) of Brevibacillus brevis (Bacillus brevis).